Here is an 885-residue protein sequence, read N- to C-terminus: GPI ethanolamine phosphate transferase 2 (885 aa).

N-linked (GlcNAc...) asparagine glycans are attached at residues asparagine 82, asparagine 155, and asparagine 194. Residues aspartate 413 to asparagine 433 traverse the membrane as a helical segment. Asparagine 443 is a glycosylation site (N-linked (GlcNAc...) asparagine). 3 helical membrane passes run valine 447–isoleucine 467, isoleucine 473–phenylalanine 493, and serine 495–serine 514. N-linked (GlcNAc...) asparagine glycosylation is present at asparagine 516. The next 8 helical transmembrane spans lie at leucine 539–glycine 559, glycine 581–leucine 601, isoleucine 648–isoleucine 668, glutamate 697–tyrosine 717, tyrosine 726–glycine 746, valine 768–leucine 788, isoleucine 820–valine 840, and serine 865–phenylalanine 885.

This sequence belongs to the PIGG/PIGN/PIGO family. PIGG subfamily.

The protein localises to the endoplasmic reticulum membrane. It functions in the pathway glycolipid biosynthesis; glycosylphosphatidylinositol-anchor biosynthesis. Ethanolamine phosphate transferase involved in glycosylphosphatidylinositol-anchor biosynthesis. Transfers ethanolamine phosphate to the GPI second mannose. The chain is GPI ethanolamine phosphate transferase 2 (GPI7) from Candida albicans (strain SC5314 / ATCC MYA-2876) (Yeast).